The chain runs to 214 residues: Variable small protein 1 (214 aa).

The signal sequence occupies residues 1–18 (MRKRISAIIMTLFMVFMS). Residue cysteine 19 is the site of N-palmitoyl cysteine attachment. Residue cysteine 19 is the site of S-diacylglycerol cysteine attachment.

It belongs to the variable small protein (Vsp) family.

Its subcellular location is the cell outer membrane. Functionally, the Vlp and Vsp proteins are antigenically distinct proteins, only one vlp or vsp gene is transcriptionally active at any one time. Switching between these genes is a mechanism of host immune response evasion. This Borrelia hermsii protein is Variable small protein 1.